Here is a 240-residue protein sequence, read N- to C-terminus: LexA repressor (240 aa).

Positions 26-46 (FDEMKEALDLASKSGIHRLIT) form a DNA-binding region, H-T-H motif. Active-site for autocatalytic cleavage activity residues include S161 and K199.

The protein belongs to the peptidase S24 family. In terms of assembly, homodimer.

It carries out the reaction Hydrolysis of Ala-|-Gly bond in repressor LexA.. Its function is as follows. Represses a number of genes involved in the response to DNA damage (SOS response), including recA and lexA. In the presence of single-stranded DNA, RecA interacts with LexA causing an autocatalytic cleavage which disrupts the DNA-binding part of LexA, leading to derepression of the SOS regulon and eventually DNA repair. This Brucella ovis (strain ATCC 25840 / 63/290 / NCTC 10512) protein is LexA repressor.